Here is a 242-residue protein sequence, read N- to C-terminus: Ubiquinone biosynthesis O-methyltransferase (242 aa).

S-adenosyl-L-methionine-binding residues include arginine 44, glycine 64, aspartate 85, and methionine 129.

The protein belongs to the methyltransferase superfamily. UbiG/COQ3 family.

It catalyses the reaction a 3-demethylubiquinol + S-adenosyl-L-methionine = a ubiquinol + S-adenosyl-L-homocysteine + H(+). It carries out the reaction a 3-(all-trans-polyprenyl)benzene-1,2-diol + S-adenosyl-L-methionine = a 2-methoxy-6-(all-trans-polyprenyl)phenol + S-adenosyl-L-homocysteine + H(+). It participates in cofactor biosynthesis; ubiquinone biosynthesis. Functionally, O-methyltransferase that catalyzes the 2 O-methylation steps in the ubiquinone biosynthetic pathway. The protein is Ubiquinone biosynthesis O-methyltransferase of Citrobacter koseri (strain ATCC BAA-895 / CDC 4225-83 / SGSC4696).